A 618-amino-acid polypeptide reads, in one-letter code: Acetolactate synthase (618 aa).

The segment at 1-30 (MSAPTKPHSPTFKPEPHSAANEPKHPAARP) is disordered. A thiamine diphosphate-binding site is contributed by E85. FAD is bound by residues R187, 293-314 (HGTVAAVAALQRSDLLIALGTR), and 336-355 (DIDPAEIGKNRHADVPIVGD). Positions 429-509 (QHQMWAAQFI…VKVALINNGN (81 aa)) are thiamine pyrophosphate binding. D480 and N507 together coordinate Mg(2+).

This sequence belongs to the TPP enzyme family. The cofactor is Mg(2+). Thiamine diphosphate is required as a cofactor.

The catalysed reaction is 2 pyruvate + H(+) = (2S)-2-acetolactate + CO2. The protein operates within amino-acid biosynthesis; L-isoleucine biosynthesis; L-isoleucine from 2-oxobutanoate: step 1/4. It functions in the pathway amino-acid biosynthesis; L-valine biosynthesis; L-valine from pyruvate: step 1/4. The protein is Acetolactate synthase (ilvB) of Mycobacterium bovis (strain ATCC BAA-935 / AF2122/97).